We begin with the raw amino-acid sequence, 414 residues long: tRNA(Ile)-lysidine synthase (414 aa).

13–18 (SGGIDS) serves as a coordination point for ATP.

It belongs to the tRNA(Ile)-lysidine synthase family.

Its subcellular location is the cytoplasm. The catalysed reaction is cytidine(34) in tRNA(Ile2) + L-lysine + ATP = lysidine(34) in tRNA(Ile2) + AMP + diphosphate + H(+). In terms of biological role, ligates lysine onto the cytidine present at position 34 of the AUA codon-specific tRNA(Ile) that contains the anticodon CAU, in an ATP-dependent manner. Cytidine is converted to lysidine, thus changing the amino acid specificity of the tRNA from methionine to isoleucine. The sequence is that of tRNA(Ile)-lysidine synthase from Thermotoga maritima (strain ATCC 43589 / DSM 3109 / JCM 10099 / NBRC 100826 / MSB8).